Here is a 251-residue protein sequence, read N- to C-terminus: 3-deoxy-manno-octulosonate cytidylyltransferase (251 aa).

The protein belongs to the KdsB family.

The protein resides in the cytoplasm. It carries out the reaction 3-deoxy-alpha-D-manno-oct-2-ulosonate + CTP = CMP-3-deoxy-beta-D-manno-octulosonate + diphosphate. The protein operates within nucleotide-sugar biosynthesis; CMP-3-deoxy-D-manno-octulosonate biosynthesis; CMP-3-deoxy-D-manno-octulosonate from 3-deoxy-D-manno-octulosonate and CTP: step 1/1. Its pathway is bacterial outer membrane biogenesis; lipopolysaccharide biosynthesis. Its function is as follows. Activates KDO (a required 8-carbon sugar) for incorporation into bacterial lipopolysaccharide in Gram-negative bacteria. The protein is 3-deoxy-manno-octulosonate cytidylyltransferase of Chlorobium luteolum (strain DSM 273 / BCRC 81028 / 2530) (Pelodictyon luteolum).